The following is a 217-amino-acid chain: Pyridoxine/pyridoxamine 5'-phosphate oxidase (217 aa).

Residues 13–16 (RREY) and Lys-71 contribute to the substrate site. FMN is bound by residues 66-71 (RIVLLK), 81-82 (YT), Arg-87, Lys-88, and Gln-110. Substrate contacts are provided by Tyr-128, Arg-132, and Ser-136. Residues 145 to 146 (QS) and Trp-190 contribute to the FMN site. 196 to 198 (RLH) provides a ligand contact to substrate. Arg-200 serves as a coordination point for FMN.

It belongs to the pyridoxamine 5'-phosphate oxidase family. As to quaternary structure, homodimer. FMN is required as a cofactor.

The enzyme catalyses pyridoxamine 5'-phosphate + O2 + H2O = pyridoxal 5'-phosphate + H2O2 + NH4(+). It carries out the reaction pyridoxine 5'-phosphate + O2 = pyridoxal 5'-phosphate + H2O2. The protein operates within cofactor metabolism; pyridoxal 5'-phosphate salvage; pyridoxal 5'-phosphate from pyridoxamine 5'-phosphate: step 1/1. Its pathway is cofactor metabolism; pyridoxal 5'-phosphate salvage; pyridoxal 5'-phosphate from pyridoxine 5'-phosphate: step 1/1. Functionally, catalyzes the oxidation of either pyridoxine 5'-phosphate (PNP) or pyridoxamine 5'-phosphate (PMP) into pyridoxal 5'-phosphate (PLP). This Yersinia pestis bv. Antiqua (strain Antiqua) protein is Pyridoxine/pyridoxamine 5'-phosphate oxidase.